Here is a 331-residue protein sequence, read N- to C-terminus: DSC E3 ubiquitin ligase complex subunit D (331 aa).

Residue N26 is glycosylated (N-linked (GlcNAc...) asparagine). Transmembrane regions (helical) follow at residues 63–83 (ILIY…ILFA), 107–127 (PFIG…NFFT), and 159–179 (LFLL…LIVE). The interval 188-225 (STTSTEILRVQDHDSEERGVHRTRPESRSSVVGAELDE) is disordered. Positions 196-214 (RVQDHDSEERGVHRTRPES) are enriched in basic and acidic residues.

Component of the DSC E3 ubiquitin ligase complex composed of dscA, dscB, dscC and dscD.

It is found in the endoplasmic reticulum membrane. It functions in the pathway protein modification; protein ubiquitination. Its function is as follows. Component of the DSC E3 ubiquitin ligase complex which is required for the srbA transcriptional activator proteolytic cleavage to release the soluble transcription factor from the membrane in low oxygen or sterol conditions. Required for growth during hypoxia and triazole drug susceptibility, as well as for virulence in a murine model of invasive pulmonary aspergillosis (IPA). In Aspergillus fumigatus (strain ATCC MYA-4609 / CBS 101355 / FGSC A1100 / Af293) (Neosartorya fumigata), this protein is DSC E3 ubiquitin ligase complex subunit D.